Consider the following 61-residue polypeptide: Metallothionein-1 (61 aa).

Methionine 1 is modified (N-acetylmethionine). A beta region spans residues 1–29; it reads MDPNCSCSTGGSCTCSSSCGCKNCKCTSC. A divalent metal cation contacts are provided by cysteine 5, cysteine 7, cysteine 13, cysteine 15, cysteine 19, cysteine 21, cysteine 24, cysteine 26, cysteine 29, cysteine 33, cysteine 34, cysteine 36, cysteine 37, cysteine 41, cysteine 44, cysteine 48, cysteine 50, cysteine 57, cysteine 59, and cysteine 60. The segment at 30–61 is alpha; the sequence is KKSCCSCCPVGCSKCAQGCVCKGASDKCTCCA.

Belongs to the metallothionein superfamily. Type 1 family.

Its function is as follows. Metallothioneins have a high content of cysteine residues that bind various heavy metals; these proteins are transcriptionally regulated by both heavy metals and glucocorticoids. The sequence is that of Metallothionein-1 (Mt1) from Rattus norvegicus (Rat).